Reading from the N-terminus, the 725-residue chain is Ribosomal RNA large subunit methyltransferase K/L (725 aa).

One can recognise a THUMP domain in the interval 46 to 157; the sequence is VGYRLCLWSR…KGQAVLSLDL (112 aa).

It belongs to the methyltransferase superfamily. RlmKL family.

The protein localises to the cytoplasm. It catalyses the reaction guanosine(2445) in 23S rRNA + S-adenosyl-L-methionine = N(2)-methylguanosine(2445) in 23S rRNA + S-adenosyl-L-homocysteine + H(+). The enzyme catalyses guanosine(2069) in 23S rRNA + S-adenosyl-L-methionine = N(2)-methylguanosine(2069) in 23S rRNA + S-adenosyl-L-homocysteine + H(+). Specifically methylates the guanine in position 2445 (m2G2445) and the guanine in position 2069 (m7G2069) of 23S rRNA. The sequence is that of Ribosomal RNA large subunit methyltransferase K/L from Stutzerimonas stutzeri (strain A1501) (Pseudomonas stutzeri).